Reading from the N-terminus, the 485-residue chain is Acyl transferase 1 (485 aa).

His172 functions as the Proton acceptor in the catalytic mechanism.

Belongs to the plant acyltransferase family. As to expression, highly expressed in young panicles. Expressed in leaf sheaths and panicles.

In terms of biological role, involved in defense against pathogens. May contribute to disease resistance by potentiating disease resistance signaling, or producing phytoalexin-like secondary products. This Oryza sativa subsp. japonica (Rice) protein is Acyl transferase 1.